The chain runs to 283 residues: MVLMIVSGRSGSGKSVALRALEDMGFYCVDNLPVVLLPQLASTLADRNISAAVSIDVRNMPESPEVFEHAMTQLPDSFSPQLLFLDADRNTLIRRYSDTRRLHPLSTKNLSLESAIDEESDLLEPLRSRADLIIDTSEMSVHELAEMLRTRLLGKRERELTMVFESFGFKHGIPIDADYVFDVRFLPNPHWDPKLRPMTGLDKPVISFLDRHTEVHNFIYQTRSYLELWLPMLETNNRSYLTVAIGCTGGKHRSVYVAEQLADYFRARGKNVQSRHRTLEKRK.

G8–S15 is an ATP binding site. D56–N59 provides a ligand contact to GTP. Positions R266–K283 are RNA-binding.

Belongs to the RapZ-like family. RapZ subfamily. As to quaternary structure, homotrimer.

Modulates the synthesis of GlmS, by affecting the processing and stability of the regulatory small RNA GlmZ. When glucosamine-6-phosphate (GlcN6P) concentrations are high in the cell, RapZ binds GlmZ and targets it to cleavage by RNase E. Consequently, GlmZ is inactivated and unable to activate GlmS synthesis. Under low GlcN6P concentrations, RapZ is sequestered and inactivated by an other regulatory small RNA, GlmY, preventing GlmZ degradation and leading to synthesis of GlmS. This is RNase adapter protein RapZ from Yersinia enterocolitica serotype O:8 / biotype 1B (strain NCTC 13174 / 8081).